The following is a 196-amino-acid chain: dTTP/UTP pyrophosphatase (196 aa).

D72 serves as the catalytic Proton acceptor.

This sequence belongs to the Maf family. YhdE subfamily. It depends on a divalent metal cation as a cofactor.

Its subcellular location is the cytoplasm. The enzyme catalyses dTTP + H2O = dTMP + diphosphate + H(+). It catalyses the reaction UTP + H2O = UMP + diphosphate + H(+). Its function is as follows. Nucleoside triphosphate pyrophosphatase that hydrolyzes dTTP and UTP. May have a dual role in cell division arrest and in preventing the incorporation of modified nucleotides into cellular nucleic acids. The sequence is that of dTTP/UTP pyrophosphatase from Chlamydia caviae (strain ATCC VR-813 / DSM 19441 / 03DC25 / GPIC) (Chlamydophila caviae).